A 253-amino-acid chain; its full sequence is Chorismate mutase 2, cytosolic (253 aa).

The 252-residue stretch at 2–253 folds into the Chorismate mutase domain; sequence DAAGGDQLSL…EVEYLLRRLD (252 aa).

In terms of assembly, homodimer. Interacts with Cmu1 of the fungal pathogen Ustilago maydis.

The protein localises to the cytoplasm. Its subcellular location is the cytosol. It catalyses the reaction chorismate = prephenate. The protein operates within metabolic intermediate biosynthesis; prephenate biosynthesis; prephenate from chorismate: step 1/1. No allosteric regulation. The polypeptide is Chorismate mutase 2, cytosolic (Zea mays (Maize)).